Consider the following 422-residue polypeptide: Sphingomyelin phosphodiesterase 2 (422 aa).

Position 49 (Glu49) interacts with Mg(2+). His272 functions as the Proton acceptor in the catalytic mechanism. The next 2 helical transmembrane spans lie at 325-345 (ALFG…CVLA) and 354-374 (AIML…VYLF). The tract at residues 397–422 (TETQDLGSEPHPTHCRQQEADRAEEK) is disordered. A compositionally biased stretch (basic and acidic residues) spans 412–422 (RQQEADRAEEK).

It belongs to the neutral sphingomyelinase family. The cofactor is Mg(2+).

The protein resides in the membrane. It catalyses the reaction a sphingomyelin + H2O = phosphocholine + an N-acylsphing-4-enine + H(+). It carries out the reaction 1-O-octadecyl-sn-glycero-3-phosphocholine + H2O = 1-O-octadecyl-sn-glycerol + phosphocholine + H(+). The catalysed reaction is an N-(acyl)-sphingosylphosphocholine + H2O = an N-acyl-sphingoid base + phosphocholine + H(+). The enzyme catalyses 1-hexadecanoyl-sn-glycero-3-phosphocholine + H2O = 1-hexadecanoyl-sn-glycerol + phosphocholine + H(+). It catalyses the reaction a sphingosylphosphocholine + H2O = a sphingoid base + phosphocholine + H(+). It carries out the reaction 1-O-hexadecyl-sn-glycero-3-phosphocholine + H2O = 1-O-hexadecyl-sn-glycerol + phosphocholine + H(+). It functions in the pathway lipid metabolism; sphingolipid metabolism. Catalyzes the hydrolysis of sphingomyelin to form ceramide and phosphocholine. Ceramide mediates numerous cellular functions, such as apoptosis and growth arrest, and is capable of regulating these 2 cellular events independently. Also hydrolyzes sphingosylphosphocholine. Hydrolyze 1-acyl-2-lyso-sn-glycero-3-phosphocholine (lyso-PC) and 1-O-alkyl-2-lyso-sn-glycero-3-phosphocholine (lyso-platelet-activating factor). This chain is Sphingomyelin phosphodiesterase 2 (Smpd2), found in Rattus norvegicus (Rat).